A 259-amino-acid polypeptide reads, in one-letter code: UPF0246 protein PputGB1_4560 (259 aa).

This sequence belongs to the UPF0246 family.

The sequence is that of UPF0246 protein PputGB1_4560 from Pseudomonas putida (strain GB-1).